The following is a 37-amino-acid chain: Kappa-actitoxin-Bcs3b (37 aa).

The ShKT domain occupies 2-37; sequence CKDGFPTATCQHAKLVGNCKNSQKYRANCAKTCGPC. Disulfide bonds link Cys-2–Cys-37, Cys-11–Cys-30, and Cys-20–Cys-34. A crucial for binding to potassium channels region spans residues 25–26; it reads KY.

This sequence belongs to the sea anemone type 1 potassium channel toxin family. Type 1b subfamily.

It localises to the secreted. It is found in the nematocyst. Inhibits voltage-gated potassium channels (IC(50)=14.42 nM for rKCNA1/Kv1.1, IC(50)=80.4 nM for rKCNA2/Kv1.2, IC(50)=7.76 nM for rKCNA6/Kv1.6, IC(50)=13.12 nM for hKCNA3/Kv1.3, and IC(50)=49.14 nM for insect Shaker IR). Binds the Shaker IR channels in a voltage-independent manner. The polypeptide is Kappa-actitoxin-Bcs3b (Bunodosoma caissarum (Sea anemone)).